The chain runs to 469 residues: Relaxin-3 receptor 1 (469 aa).

The Extracellular segment spans residues 1-81 (MQMADAATIA…ESADTEARVR (81 aa)). N-linked (GlcNAc...) asparagine glycans are attached at residues Asn36 and Asn40. Residues 82–102 (ILISVVYWVVCALGLAGNLLV) traverse the membrane as a helical segment. At 103–119 (LYLMKSMQGWRKSSINL) the chain is on the cytoplasmic side. A helical membrane pass occupies residues 120-140 (FVTNLALTDFQFVLTLPFWAV). At 141–156 (ENALDFKWPFGKAMCK) the chain is on the extracellular side. The cysteines at positions 155 and 247 are disulfide-linked. Residues 157 to 177 (IVSMVTSMNMYASVFFLTAMS) traverse the membrane as a helical segment. Topologically, residues 178 to 215 (VTRYHSVASALKSHRTRGHGRGDCCGRSLGDSCCFSAK) are cytoplasmic. Residues 216–236 (ALCVWIWALAALASLPSAIFS) form a helical membrane-spanning segment. The Extracellular segment spans residues 237-270 (TTVKVMGEELCLVRFPDKLLGRDRQFWLGLYHSQ). Residues 271–291 (KVLLGFVLPLGIIILCYLLLV) form a helical membrane-spanning segment. The Cytoplasmic portion of the chain corresponds to 292 to 329 (RFIADRRAAGTKGGAAVAGGRPTGASARRLSKVTKSVT). A helical transmembrane segment spans residues 330 to 350 (IVVLSFFLCWLPNQALTTWSI). At 351-356 (LIKFNA) the chain is on the extracellular side. Residues 357–377 (VPFSQEYFLCQVYAFPVSVCL) traverse the membrane as a helical segment. At 378-469 (AHSNSCLNPV…YDLLPSSSAY (92 aa)) the chain is on the cytoplasmic side.

It belongs to the G-protein coupled receptor 1 family. Expressed predominantly in brain regions. Highest expression in substantia nigra and pituitary, followed by hippocampus, spinal cord, amygdala, caudate nucleus and corpus callosum, quite low level in cerebellum. In peripheral tissues, relatively high levels in adrenal glands, low levels in pancreas, salivary gland, placenta, mammary gland and testis.

It is found in the cell membrane. Functionally, receptor for RNL3/relaxin-3. Binding of the ligand inhibit cAMP accumulation. The chain is Relaxin-3 receptor 1 (RXFP3) from Homo sapiens (Human).